We begin with the raw amino-acid sequence, 26 residues long: Probable early E4 17 kDa protein (26 aa).

The polypeptide is Probable early E4 17 kDa protein (Homo sapiens (Human)).